A 337-amino-acid polypeptide reads, in one-letter code: Anthranilate phosphoribosyltransferase (337 aa).

Residues glycine 81, 84–85 (GD), serine 89, 91–94 (NVST), 109–117 (KHGNRAASS), and alanine 121 each bind 5-phospho-alpha-D-ribose 1-diphosphate. Glycine 81 serves as a coordination point for anthranilate. A Mg(2+)-binding site is contributed by serine 93. Asparagine 112 contacts anthranilate. Residue arginine 167 participates in anthranilate binding. Mg(2+) contacts are provided by aspartate 226 and glutamate 227.

It belongs to the anthranilate phosphoribosyltransferase family. In terms of assembly, homodimer. It depends on Mg(2+) as a cofactor.

It carries out the reaction N-(5-phospho-beta-D-ribosyl)anthranilate + diphosphate = 5-phospho-alpha-D-ribose 1-diphosphate + anthranilate. It functions in the pathway amino-acid biosynthesis; L-tryptophan biosynthesis; L-tryptophan from chorismate: step 2/5. In terms of biological role, catalyzes the transfer of the phosphoribosyl group of 5-phosphorylribose-1-pyrophosphate (PRPP) to anthranilate to yield N-(5'-phosphoribosyl)-anthranilate (PRA). The chain is Anthranilate phosphoribosyltransferase from Methylobacterium nodulans (strain LMG 21967 / CNCM I-2342 / ORS 2060).